The following is a 722-amino-acid chain: MLEPPKFIENDCYNGSRTFTWLADMVGLSVDLVNFLICQISALFLASLFRSMLHPSKVSSKLRHTFALSIGLAFGYFCFGQQAIHIAGLPAICYIVIRTQDPRIVQRAVLLVAMSYLLCVHLMRQLYDYGSYALDITGPLMIITQKVTSLAFSIHDGFVRGDEELTKAQQYHAIRKMPSALEYFSYVWHFQSILAGPLVFYKDYIEFVEGYNLLSTPPGNGNLDSSKREVVLEPSPTKAVIRKVVGSLVCAFIFMKFVKIYPVKDMKEDDFMNNTSMVYKYWYAMMATTCIRFKYYHAWLLADAICNNSGLGFTGYDKDGNSKWDLISNINVLSFEFSTNMRDAINNWNCGTNRWLRTLVYERVPQQYGTLLTFALSAVWHGFYPGYYLTFATGAVVVTAARTGRRLFRHRFQSTQVTRMFYDILTCLITRVVLGYATFPFVLLEFMGSIKLYLRFYLCLHIISLVTIFILPKFIRGERRLRTSNGNGNVRLSGSGNTKDAVTTSVESTAALTAGNDLNEDKEEDKHAQCKVHTPTQQQPAAGPHKTTVEQPTEQPNNVNLRSRPQQQQPHLEKKAMPPTCARDAVSVPHDQCEMDQLSSKLKEKIEAETKNIEEFIDKTVTETVSGIVEFKNDLMRDIEFPKLKLPGSNGAISLDSSNGGGLRKRNISSVHDNGTDPGHATADLHPPLEENGAAFLKKEIEVINAVVQQAVPAVLSNGHAK.

A run of 5 helical transmembrane segments spans residues 25–45, 62–84, 104–123, 180–200, and 243–263; these read MVGL…ALFL, LRHT…QQAI, IVQR…VHLM, ALEY…PLVF, and KVVG…IYPV. Catalysis depends on residues asparagine 349 and histidine 381. 3 consecutive transmembrane segments (helical) span residues 378–398, 424–444, and 452–472; these read AVWH…AVVV, ILTC…FVLL, and LYLR…FILP. Composition is skewed to polar residues over residues 485-511 and 549-570; these read NGNG…STAA and VEQP…QQQP. Disordered regions lie at residues 485–582 and 650–687; these read NGNG…PTCA and NGAI…DLHP.

The protein belongs to the membrane-bound acyltransferase family.

The protein localises to the endoplasmic reticulum. It is found in the membrane. The enzyme catalyses a 1-acyl-sn-glycero-3-phospho-L-serine + an acyl-CoA = a 1,2-diacyl-sn-glycero-3-phospho-L-serine + CoA. It carries out the reaction 1-(9Z-octadecenoyl)-sn-glycero-3-phospho-L-serine + (9Z)-hexadecenoyl-CoA = 1-(9Z-octadecenoyl)-2-(9Z-hexadecenoyl)-sn-glycero-3-phospho-L-serine + CoA. The catalysed reaction is 1-(9Z-octadecenoyl)-sn-glycero-3-phospho-L-serine + (9Z)-octadecenoyl-CoA = 1,2-di-(9Z)-octadecenoyl-sn-glycero-3-phospho-L-serine + CoA. It catalyses the reaction a 1-acyl-sn-glycero-3-phosphocholine + an acyl-CoA = a 1,2-diacyl-sn-glycero-3-phosphocholine + CoA. The enzyme catalyses 1-hexadecanoyl-sn-glycero-3-phosphocholine + (9Z)-octadecenoyl-CoA = 1-hexadecanoyl-2-(9Z-octadecenoyl)-sn-glycero-3-phosphocholine + CoA. It carries out the reaction (9Z)-hexadecenoyl-CoA + 1-hexadecanoyl-sn-glycero-3-phosphocholine = 1-hexadecanoyl-2-(9Z-hexadecenoyl)-sn-glycero-3-phosphocholine + CoA. The catalysed reaction is a 1-acyl-sn-glycero-3-phosphoethanolamine + an acyl-CoA = a 1,2-diacyl-sn-glycero-3-phosphoethanolamine + CoA. It catalyses the reaction 1-hexadecanoyl-sn-glycero-3-phosphoethanolamine + (9Z)-octadecenoyl-CoA = 1-hexadecanoyl-2-(9Z-octadecenoyl)-sn-glycero-3-phosphoethanolamine + CoA. The enzyme catalyses 1-hexadecanoyl-sn-glycero-3-phosphoethanolamine + (9Z,12Z)-octadecadienoyl-CoA = 1-hexadecanoyl-2-(9Z,12Z-octadecadienoyl)-sn-glycero-3-phosphoethanolamine + CoA. It carries out the reaction 1-hexadecanoyl-sn-glycero-3-phosphoethanolamine + (9Z)-hexadecenoyl-CoA = 1-hexadecanoyl-2-(9Z)-hexadecenoyl-sn-glycero-3-phosphoethanolamine + CoA. The catalysed reaction is 1-(9Z-octadecenoyl)-sn-glycero-3-phospho-(1'-sn-glycerol) + (9Z)-octadecenoyl-CoA = 1,2-di-(9Z-octadecenoyl)-sn-glycero-3-phospho-(1'-sn-glycerol) + CoA. The protein operates within lipid metabolism; phospholipid metabolism. Functionally, acyltransferase with broad-specificity, that mediates the acylation of lysophospholipids to produce phospholipids (glycerophospholipids). Converts lysophosphatidylserine (1-acyl-2-hydroxy-sn-glycero-3-phospho-L-serine or LPS) to phosphatidylserine (1,2-diacyl-sn-glycero-3-phospho-L-serine or PS) (LPSAT activity), lysophosphatidylcholine (1-acyl-sn-glycero-3-phosphocholine or LPC) to phosphatidylcholine (1,2-diacyl-sn-glycero-3-phosphocholine or PC) (LPCAT activity), also lysophosphatidylethanolamine (1-acyl-sn-glycero-3-phosphochethanolamine or LPE) to phosphatidylchethanolamine (LPEAT activity) and lysophosphatidylglycerol (1-acyl-2-hydroxy-sn-glycero-3-phospho-(1'-sn-glycerol) or LPG) to phosphatidylglycerol (1,2-diacyl-sn-glycero-3-phospho-(1'-sn-glycerol) or PG) (LPGAT activity). Has a preference for unsaturated fatty acids of at least 16 carbons such as oleoyl-CoA ((9Z)-octadecenoyl-CoA) and palmitoleoyl-CoA ((9Z)-hexadecenoyl-CoA). Glycerophospholipids are important structural and functional components of cellular membrane, acyl-chain remodeling regulates the molecular species distribution of glycerophospholipids which can affect membrane fluidity and curvature. Essential for fertility and viability together with Nessy protein (Nes). The sequence is that of Lysophospholipid acyltransferase 6 from Drosophila melanogaster (Fruit fly).